Consider the following 89-residue polypeptide: Small ribosomal subunit protein uS15 (89 aa).

Basic and acidic residues predominate over residues 1–21; that stretch reads MALSKEQKTETLKEFGLHETD. The interval 1–22 is disordered; it reads MALSKEQKTETLKEFGLHETDT.

Belongs to the universal ribosomal protein uS15 family. Part of the 30S ribosomal subunit. Forms a bridge to the 50S subunit in the 70S ribosome, contacting the 23S rRNA.

One of the primary rRNA binding proteins, it binds directly to 16S rRNA where it helps nucleate assembly of the platform of the 30S subunit by binding and bridging several RNA helices of the 16S rRNA. In terms of biological role, forms an intersubunit bridge (bridge B4) with the 23S rRNA of the 50S subunit in the ribosome. This Corynebacterium jeikeium (strain K411) protein is Small ribosomal subunit protein uS15.